The following is a 266-amino-acid chain: PDZ domain-containing protein 9 (266 aa).

The 83-residue stretch at 27–109 folds into the PDZ domain; it reads KVIQTKLTVG…GTVLQIKAYR (83 aa).

The protein is PDZ domain-containing protein 9 (Pdzd9) of Mus musculus (Mouse).